The chain runs to 21 residues: Peptide PGLa-R2 (21 aa).

Leu-21 carries the post-translational modification Leucine amide.

In terms of tissue distribution, expressed by the skin glands.

The protein localises to the secreted. Its function is as follows. Antimicrobial peptide. This is Peptide PGLa-R2 from Xenopus ruwenzoriensis (Uganda clawed frog).